The following is a 157-amino-acid chain: Ribosome maturation factor RimP (157 aa).

The protein belongs to the RimP family.

Its subcellular location is the cytoplasm. In terms of biological role, required for maturation of 30S ribosomal subunits. The protein is Ribosome maturation factor RimP of Bacillus licheniformis (strain ATCC 14580 / DSM 13 / JCM 2505 / CCUG 7422 / NBRC 12200 / NCIMB 9375 / NCTC 10341 / NRRL NRS-1264 / Gibson 46).